Consider the following 166-residue polypeptide: Ribonuclease H (166 aa).

An RNase H type-1 domain is found at 10–151 (KRVRVDMFTD…ADELARRGTS (142 aa)). Mg(2+) is bound by residues Asp-19, Glu-57, Asp-79, and Asp-143. A compositionally biased stretch (basic and acidic residues) spans 145–157 (LARRGTSEARQGK). Residues 145–166 (LARRGTSEARQGKVDGQSSTIL) are disordered.

This sequence belongs to the RNase H family. As to quaternary structure, monomer. It depends on Mg(2+) as a cofactor.

The protein resides in the cytoplasm. It carries out the reaction Endonucleolytic cleavage to 5'-phosphomonoester.. Endonuclease that specifically degrades the RNA of RNA-DNA hybrids. This Rhodospirillum rubrum (strain ATCC 11170 / ATH 1.1.1 / DSM 467 / LMG 4362 / NCIMB 8255 / S1) protein is Ribonuclease H.